The primary structure comprises 131 residues: UPF0251 protein MMP0619 (131 aa).

The protein belongs to the UPF0251 family.

In Methanococcus maripaludis (strain DSM 14266 / JCM 13030 / NBRC 101832 / S2 / LL), this protein is UPF0251 protein MMP0619.